We begin with the raw amino-acid sequence, 1099 residues long: 1-phosphatidylinositol 4,5-bisphosphate phosphodiesterase 1 (1099 aa).

A compositionally biased stretch (basic and acidic residues) spans 1–10; that stretch reads MLESLNRRNS. 2 disordered regions span residues 1–109 and 128–164; these read MLES…SSTT and ESRS…KSIQ. Composition is skewed to low complexity over residues 43-66 and 86-109; these read PPKS…KSDL and PKQQ…SSTT. Residues 131 to 141 show a composition bias toward polar residues; sequence SIVSNNGGSPM. The segment covering 142–155 has biased composition (low complexity); that stretch reads SDSTTVTSTLSTDT. One can recognise a PI-PLC X-box domain in the interval 566-726; that stretch reads YDYPLNEYFI…LKHKFIIKVK (161 aa). Active-site residues include His579 and His642. Residues Lys724 and Lys726 each coordinate substrate. The tract at residues 742 to 780 is disordered; it reads FTTSTTTTTTTTTTTTTATSLSEDNENNKSNSSSTSSFI. A compositionally biased stretch (low complexity) spans 743–778; the sequence is TTSTTTTTTTTTTTTTATSLSEDNENNKSNSSSTSS. The PI-PLC Y-box domain maps to 794–912; it reads ELSNLGIYTQ…GYVLKPSVLR (119 aa). The substrate site is built by Ser823 and Arg852. The C2 domain maps to 917-1071; sequence KSSSSNVDTR…QGYRYIYLND (155 aa).

The catalysed reaction is a 1,2-diacyl-sn-glycero-3-phospho-(1D-myo-inositol-4,5-bisphosphate) + H2O = 1D-myo-inositol 1,4,5-trisphosphate + a 1,2-diacyl-sn-glycerol + H(+). Functionally, the production of the second messenger molecules diacylglycerol (DAG) and inositol 1,4,5-trisphosphate (IP3) is mediated by activated phosphatidylinositol-specific phospholipase C enzymes. This Candida albicans (Yeast) protein is 1-phosphatidylinositol 4,5-bisphosphate phosphodiesterase 1 (PLC1).